The primary structure comprises 1158 residues: ATP-dependent helicase/deoxyribonuclease subunit B (1158 aa).

The region spanning 1-275 (MTLHAYLGRA…QYFNQLYRFN (275 aa)) is the UvrD-like helicase ATP-binding domain. 8 to 15 (GRAGTGKS) lines the ATP pocket. Residues 269 to 583 (NQLYRFNNQD…SIGTMDLAKV (315 aa)) enclose the UvrD-like helicase C-terminal domain. 4 residues coordinate [4Fe-4S] cluster: Cys784, Cys1112, Cys1115, and Cys1121.

This sequence belongs to the helicase family. AddB/RexB type 1 subfamily. In terms of assembly, heterodimer of AddA and AddB. Requires Mg(2+) as cofactor. It depends on [4Fe-4S] cluster as a cofactor.

Functionally, the heterodimer acts as both an ATP-dependent DNA helicase and an ATP-dependent, dual-direction single-stranded exonuclease. Recognizes the chi site generating a DNA molecule suitable for the initiation of homologous recombination. The AddB subunit has 5' -&gt; 3' nuclease activity but not helicase activity. The polypeptide is ATP-dependent helicase/deoxyribonuclease subunit B (Staphylococcus aureus (strain COL)).